The sequence spans 405 residues: 3-hydroxy-3-methylglutaryl-coenzyme A reductase (405 aa).

Catalysis depends on charge relay system residues Glu100 and Asp310. The active-site Proton donor is His400.

This sequence belongs to the HMG-CoA reductase family.

It catalyses the reaction (R)-mevalonate + 2 NADP(+) + CoA = (3S)-3-hydroxy-3-methylglutaryl-CoA + 2 NADPH + 2 H(+). It functions in the pathway metabolic intermediate biosynthesis; (R)-mevalonate biosynthesis; (R)-mevalonate from acetyl-CoA: step 3/3. In terms of biological role, converts HMG-CoA to mevalonate. The protein is 3-hydroxy-3-methylglutaryl-coenzyme A reductase (hmgA) of Methanocaldococcus jannaschii (strain ATCC 43067 / DSM 2661 / JAL-1 / JCM 10045 / NBRC 100440) (Methanococcus jannaschii).